The sequence spans 103 residues: Carboxysome shell protein CsoS1 (103 aa).

Residues 9–94 form the BMC domain; that stretch reads ALGMIETRGL…PHREVEPALG (86 aa).

This sequence belongs to the bacterial microcompartments protein family. CsoS1 subfamily. In terms of assembly, homohexamer with a small central pore. Forms a CsoS2-CsoS1-RuBisCO complex.

It is found in the carboxysome. In terms of biological role, one of the shell proteins of the carboxysome, a polyhedral inclusion where RuBisCO (ribulose bisphosphate carboxylase, ccbL-ccbS) is sequestered. Assembles into hexamers which make sheets that form the facets of the polyhedral carboxysome. The protein is Carboxysome shell protein CsoS1 of Prochlorococcus marinus (strain MIT 9313).